We begin with the raw amino-acid sequence, 394 residues long: Acid ceramidase (394 aa).

Positions 1–20 are cleaved as a signal peptide; the sequence is MLGRSLLTWVLAAAVTCAQA. C30 and C339 are joined by a disulfide. The active-site Nucleophile is C142. N194, N258, N285, and N341 each carry an N-linked (GlcNAc...) asparagine glycan. C387 and C391 are joined by a disulfide.

Belongs to the acid ceramidase family. Heterodimer; disulfide-linked. The heterodimer is composed of the disulfide-linked alpha and beta chains produced by autocatalytic cleavage of the precursor. In terms of processing, N-glycosylated. Proteolytically cleaved into two chains alpha and beta that remain associated via a disulfide bond. Cleavage gives rise to a conformation change that activates the enzyme. The same catalytic Cys residue mediates the autoproteolytic cleavage and subsequent hydrolysis of lipid substrates. The beta chain may undergo an additional C-terminal processing.

The protein resides in the lysosome. Its subcellular location is the secreted. It catalyses the reaction an N-acylsphing-4-enine + H2O = sphing-4-enine + a fatty acid. The catalysed reaction is N-dodecanoylsphing-4-enine + H2O = dodecanoate + sphing-4-enine. The enzyme catalyses N-tetradecanoylsphing-4-enine + H2O = tetradecanoate + sphing-4-enine. It carries out the reaction N-hexadecanoylsphing-4-enine + H2O = sphing-4-enine + hexadecanoate. It catalyses the reaction N-octadecanoylsphing-4-enine + H2O = sphing-4-enine + octadecanoate. The catalysed reaction is N-dodecanoyl-(4R)-hydroxysphinganine + H2O = (4R)-hydroxysphinganine + dodecanoate. The enzyme catalyses N-(dodecanoyl)-sphinganine + H2O = dodecanoate + sphinganine. It carries out the reaction N-(acetyl)-sphing-4-enine + H2O = sphing-4-enine + acetate. It catalyses the reaction N-(hexanoyl)sphing-4-enine + H2O = hexanoate + sphing-4-enine. The catalysed reaction is N-octanoylsphing-4-enine + H2O = octanoate + sphing-4-enine. The enzyme catalyses N-(9Z-octadecenoyl)-sphing-4-enine + H2O = sphing-4-enine + (9Z)-octadecenoate. It carries out the reaction N-dodecanoylethanolamine + H2O = dodecanoate + ethanolamine. It functions in the pathway lipid metabolism; sphingolipid metabolism. Lysosomal ceramidase that hydrolyzes sphingolipid ceramides into sphingosine and free fatty acids at acidic pH. Ceramides, sphingosine, and its phosphorylated form sphingosine-1-phosphate are bioactive lipids that mediate cellular signaling pathways regulating several biological processes including cell proliferation, apoptosis and differentiation. Has a higher catalytic efficiency towards C12-ceramides versus other ceramides. Also catalyzes the reverse reaction allowing the synthesis of ceramides from fatty acids and sphingosine. For the reverse synthetic reaction, the natural sphingosine D-erythro isomer is more efficiently utilized as a substrate compared to D-erythro-dihydrosphingosine and D-erythro-phytosphingosine, while the fatty acids with chain lengths of 12 or 14 carbons are the most efficiently used. Also has an N-acylethanolamine hydrolase activity. By regulating the levels of ceramides, sphingosine and sphingosine-1-phosphate in the epidermis, mediates the calcium-induced differentiation of epidermal keratinocytes. Also indirectly regulates tumor necrosis factor/TNF-induced apoptosis. By regulating the intracellular balance between ceramides and sphingosine, in adrenocortical cells, probably also acts as a regulator of steroidogenesis. The sequence is that of Acid ceramidase from Rattus norvegicus (Rat).